A 425-amino-acid polypeptide reads, in one-letter code: Light-independent protochlorophyllide reductase subunit N (425 aa).

3 residues coordinate [4Fe-4S] cluster: C17, C42, and C103.

The protein belongs to the BchN/ChlN family. Protochlorophyllide reductase is composed of three subunits; ChlL, ChlN and ChlB. Forms a heterotetramer of two ChlB and two ChlN subunits. [4Fe-4S] cluster is required as a cofactor.

The enzyme catalyses chlorophyllide a + oxidized 2[4Fe-4S]-[ferredoxin] + 2 ADP + 2 phosphate = protochlorophyllide a + reduced 2[4Fe-4S]-[ferredoxin] + 2 ATP + 2 H2O. It participates in porphyrin-containing compound metabolism; chlorophyll biosynthesis (light-independent). In terms of biological role, component of the dark-operative protochlorophyllide reductase (DPOR) that uses Mg-ATP and reduced ferredoxin to reduce ring D of protochlorophyllide (Pchlide) to form chlorophyllide a (Chlide). This reaction is light-independent. The NB-protein (ChlN-ChlB) is the catalytic component of the complex. The protein is Light-independent protochlorophyllide reductase subunit N of Synechococcus sp. (strain CC9605).